Reading from the N-terminus, the 319-residue chain is COP9 signalosome complex subunit 6 (319 aa).

The MPN domain occupies 33–166; it reads VALHPLVILN…VSVYESVIDI (134 aa).

It belongs to the peptidase M67A family. CSN6 subfamily. In terms of assembly, component of the CSN complex, probably composed of cops1, cops2, cops3, cops4, cops5, cops6, cops7, cops8 and cops9.

It localises to the cytoplasm. Its subcellular location is the nucleus. Component of the COP9 signalosome complex (CSN), a complex involved in various cellular and developmental processes. The CSN complex is an essential regulator of the ubiquitin (Ubl) conjugation pathway by mediating the deneddylation of the cullin subunits of E3 ligase complexes, leading to modify the Ubl ligase activity. The sequence is that of COP9 signalosome complex subunit 6 (cops6) from Xenopus tropicalis (Western clawed frog).